An 854-amino-acid chain; its full sequence is MLITERKYFWSGRIAQSRSEANLVDMEAGKLSKSCNITECQDPDLLHNWPDAFTLHGNNASKVTNPFWNQLSASNPFLDDITQLRNNRKRNNISILKEDPLLFFREIENGNSFDSSGDELDVHQLLRQSSSRKSGRSKSVSELLDILDDTAHAHQSIHNSDQILLHDLEWLKNDREAYKMAWLSQRQLARSCLDLNTISQSPGWAQTQLAEVTKACKVNHQGGSVQLPESDITVHVPQGHVAVGEFQEVSLRAFLDPPHMLNHDLSCTVSPLLEIMLGNLNTMEALLLEMKIGAEVGKDPFSQVMTEMVCLHSLGKEGPFKILSNCYIYKDTIQVKLIDLSQVMYLVVAAQAKALQSPAATIWDYIHKTTSIGIYGPKYIHPSFTVVLTVCGHNYMPGQLTISDIKKCGKNISPVVFQLWGKQSFLLDKPQDLSISIFSCDPDFEVKTEGERKEIKQKQLEAGEVVHQQFLFSLVEHREMHLFDFCVQVELPNGEPVAQFCITTPDPTPNLKRLSNLPGYLQKKEEIKSAPLSPKILVKYPTFQDKTLNFTNYGVTLKAVLRQSKIDYFLEYFKGDTIALLGEGKVKVIGQSKVKEWYVGVLRGKIGLVHCKNVKVISKEQVMFMSDSVFTTRNLLEQIVLPLKKLTYIYSVVLTLVSEKVYDWKVLADVLGYSHLSVEDFDQIHADKESEKVSYVIKKLKEDCHTKRNTRKFLYELIVALLKMDCQALVARLIREAAVLTSAVKLGKGWRELAEKLVRLTKQQMEAYEIPHRGNTGDVAVEMMWKPAYDFLYTWSAHYGNNYRDVLQDLQSALDRMKNPVTKHWRELTGVLILVNSLEVLRVTAFSTSEEVWK.

Ser-19 is subject to Phosphoserine. Residues 212-349 (VTKACKVNHQ…LSQVMYLVVA (138 aa)) enclose the ZU5 domain. The SH3 domain occupies 549–619 (NFTNYGVTLK…HCKNVKVISK (71 aa)).

As to quaternary structure, interacts with FASLG.

Its subcellular location is the cytoplasm. It is found in the nucleus. Its function is as follows. Acts as a transcription activator for MET and as a key regulator of HGF-MET signaling. This chain is Metastasis-associated in colon cancer protein 1 (MACC1), found in Pongo abelii (Sumatran orangutan).